The chain runs to 213 residues: MVQSCSAYGCKNRYDKDKPVSFHKFPLTRPSLCKEWEAAVRRKNFKPTKYSSICSEHFTPDCFKRECNNKLLKENAVPTIFLCTEPHDKKEDLLEPQEQLPPPPLPPPVSQVDAAIGLLMPPLQTPVNLSVFCDHNYTVEDTMHQRKRIHQLEQQVEKLRKKLKTAQQRCRRQERQLEKLKEVVHFQKEKDDVSERGYVILPNDYFEIVEVPA.

A THAP-type zinc finger spans residues 1 to 81; it reads MVQSCSAYGC…LKENAVPTIF (81 aa). Residues 134 to 137 carry the HCFC1-binding motif (HBM) motif; the sequence is DHNY. Residues 139–185 are involved in homodimer formation; it reads VEDTMHQRKRIHQLEQQVEKLRKKLKTAQQRCRRQERQLEKLKEVVH. A coiled-coil region spans residues 139–190; it reads VEDTMHQRKRIHQLEQQVEKLRKKLKTAQQRCRRQERQLEKLKEVVHFQKEK.

The protein belongs to the THAP1 family. In terms of assembly, homodimer. Interacts with PAWR. Component of a THAP1/THAP3-HCFC1-OGT complex that contains, either THAP1 or THAP3, HCFC1 and OGT. Interacts with OGT. Interacts (via the HBM) with HCFC1 (via the Kelch-repeat domain); the interaction recruits HCFC1 to the RRM1 promoter. Highly expressed in heart, skeletal muscle, kidney and liver. Weaker expression in brain and placenta.

The protein localises to the nucleus. It is found in the nucleoplasm. It localises to the PML body. DNA-binding transcription regulator that regulates endothelial cell proliferation and G1/S cell-cycle progression. Specifically binds the 5'-[AT]NTNN[GT]GGCA[AGT]-3' core DNA sequence and acts by modulating expression of pRB-E2F cell-cycle target genes, including RRM1. Component of a THAP1/THAP3-HCFC1-OGT complex that is required for the regulation of the transcriptional activity of RRM1. May also have pro-apoptotic activity by potentiating both serum-withdrawal and TNF-induced apoptosis. This chain is THAP domain-containing protein 1 (THAP1), found in Homo sapiens (Human).